A 589-amino-acid polypeptide reads, in one-letter code: Mediator of RNA polymerase II transcription subunit 26 (589 aa).

The TFIIS N-terminal domain occupies 10-87 (QMRDRLLQAI…RNWQKLIEPG (78 aa)). Disordered stretches follow at residues 83–233 (LIEP…TKLP), 247–320 (ARVD…DGPS), and 363–441 (LETK…PIPE). The span at 190 to 213 (LLEKDDEVPSDRIRLEHLDNDRHN) shows a compositional bias: basic and acidic residues. Residues 259–268 (SPRYSSSPRS) are compositionally biased toward low complexity. Residues 276 to 297 (KRSTTYAPKGTLSSPSLNSAQV) show a composition bias toward polar residues. 2 stretches are compositionally biased toward basic and acidic residues: residues 398-412 (SEDR…RRLT) and 424-435 (TPKESHQEEECH).

This sequence belongs to the Mediator complex subunit 26 family. As to quaternary structure, component of the Mediator complex.

The protein localises to the nucleus. In terms of biological role, component of the Mediator complex, a coactivator involved in the regulated transcription of nearly all RNA polymerase II-dependent genes. Mediator functions as a bridge to convey information from gene-specific regulatory proteins to the basal RNA polymerase II transcription machinery. Mediator is recruited to promoters by direct interactions with regulatory proteins and serves as a scaffold for the assembly of a functional preinitiation complex with RNA polymerase II and the general transcription factors. The sequence is that of Mediator of RNA polymerase II transcription subunit 26 (med26) from Danio rerio (Zebrafish).